Here is a 74-residue protein sequence, read N- to C-terminus: NAD(P)H-quinone oxidoreductase subunit L (74 aa).

Transmembrane regions (helical) follow at residues 5-25 and 43-63; these read LIIAALYLALAGAYLLVVPAA and AFMYFLVFFFFPGLLLLAPLL.

Belongs to the complex I NdhL subunit family. In terms of assembly, NDH-1 can be composed of about 15 different subunits; different subcomplexes with different compositions have been identified which probably have different functions.

The protein localises to the cellular thylakoid membrane. It carries out the reaction a plastoquinone + NADH + (n+1) H(+)(in) = a plastoquinol + NAD(+) + n H(+)(out). It catalyses the reaction a plastoquinone + NADPH + (n+1) H(+)(in) = a plastoquinol + NADP(+) + n H(+)(out). Its function is as follows. NDH-1 shuttles electrons from an unknown electron donor, via FMN and iron-sulfur (Fe-S) centers, to quinones in the respiratory and/or the photosynthetic chain. The immediate electron acceptor for the enzyme in this species is believed to be plastoquinone. Couples the redox reaction to proton translocation, and thus conserves the redox energy in a proton gradient. Cyanobacterial NDH-1 also plays a role in inorganic carbon-concentration. The polypeptide is NAD(P)H-quinone oxidoreductase subunit L (Synechococcus elongatus (strain ATCC 33912 / PCC 7942 / FACHB-805) (Anacystis nidulans R2)).